Here is a 415-residue protein sequence, read N- to C-terminus: Na(+)-translocating NADH-quinone reductase subunit B (415 aa).

4 helical membrane-spanning segments follow: residues 23 to 40 (WFAL…PGLV), 56 to 76 (IMIM…YNAG), 129 to 149 (FLPI…LFCM), and 164 to 184 (ILFA…LGIT). At Thr-236 the chain carries FMN phosphoryl threonine. 5 helical membrane passes run 275-295 (VSTL…IASW), 297-317 (IIGG…VIGS), 325-345 (MPWH…FMAT), 358-378 (WAYG…NPAY), and 381-401 (GMML…HVVV).

It belongs to the NqrB/RnfD family. As to quaternary structure, composed of six subunits; NqrA, NqrB, NqrC, NqrD, NqrE and NqrF. Riboflavin serves as cofactor. The cofactor is FMN.

Its subcellular location is the cell inner membrane. It catalyses the reaction a ubiquinone + n Na(+)(in) + NADH + H(+) = a ubiquinol + n Na(+)(out) + NAD(+). Functionally, NQR complex catalyzes the reduction of ubiquinone-1 to ubiquinol by two successive reactions, coupled with the transport of Na(+) ions from the cytoplasm to the periplasm. NqrA to NqrE are probably involved in the second step, the conversion of ubisemiquinone to ubiquinol. The protein is Na(+)-translocating NADH-quinone reductase subunit B of Vibrio cholerae serotype O1 (strain ATCC 39541 / Classical Ogawa 395 / O395).